A 275-amino-acid polypeptide reads, in one-letter code: tRNA pseudouridine synthase A (275 aa).

D55 serves as the catalytic Nucleophile. Y111 is a substrate binding site.

It belongs to the tRNA pseudouridine synthase TruA family.

The catalysed reaction is uridine(38/39/40) in tRNA = pseudouridine(38/39/40) in tRNA. Formation of pseudouridine at positions 38, 39 and 40 in the anticodon stem and loop of transfer RNAs. The chain is tRNA pseudouridine synthase A from Methanococcoides burtonii (strain DSM 6242 / NBRC 107633 / OCM 468 / ACE-M).